We begin with the raw amino-acid sequence, 177 residues long: Transcription termination/antitermination protein NusG (177 aa).

Residues 126–156 (PGETVRVIDGPFADFNGVVEEVNYEKSRIQV) enclose the KOW domain.

Belongs to the NusG family.

Participates in transcription elongation, termination and antitermination. The sequence is that of Transcription termination/antitermination protein NusG from Pseudomonas aeruginosa (strain ATCC 15692 / DSM 22644 / CIP 104116 / JCM 14847 / LMG 12228 / 1C / PRS 101 / PAO1).